Reading from the N-terminus, the 1050-residue chain is ATP-dependent DNA helicase MPH1 (1050 aa).

A Helicase ATP-binding domain is found at 95 to 262 (IVQRAFYHNL…EIIDNLNISK (168 aa)). 108–115 (LPTGLGKT) lines the ATP pocket. Positions 210–213 (DEAH) match the DEAH box motif. The Helicase C-terminal domain occupies 431–631 (KIEAMMEELD…LIDLKEQNRM (201 aa)). Disordered regions lie at residues 493–524 (DESNFGKKSKGKRVGKKQQDDSKSSSENAQIN) and 743–821 (DSDE…PPKR). The span at 499 to 508 (KKSKGKRVGK) shows a compositional bias: basic residues. Positions 786 to 799 (RTLDQHHSASEERG) are enriched in basic and acidic residues. A compositionally biased stretch (polar residues) spans 800–810 (INSNFSHESNL).

Belongs to the DEAD box helicase family. DEAH subfamily. FANCM sub-subfamily. Interacts with the MHF histone-fold complex to form the FANCM-MHF complex.

The protein resides in the nucleus. It carries out the reaction ATP + H2O = ADP + phosphate + H(+). ATP-dependent DNA helicase involved in DNA damage repair by homologous recombination and in genome maintenance. Capable of unwinding D-loops. Plays a role in limiting crossover recombinants during mitotic DNA double-strand break (DSB) repair. Component of a FANCM-MHF complex which promotes gene conversion at blocked replication forks, probably by reversal of the stalled fork. This chain is ATP-dependent DNA helicase MPH1, found in Scheffersomyces stipitis (strain ATCC 58785 / CBS 6054 / NBRC 10063 / NRRL Y-11545) (Yeast).